The chain runs to 377 residues: NADH dehydrogenase [ubiquinone] 1 alpha subcomplex subunit 9, mitochondrial (377 aa).

Residues 1 to 35 (MAAAVRFQVVRALPMSRPAISAAATSVFCSSSHRQ) constitute a mitochondrion transit peptide. Residue lysine 175 is modified to N6-succinyllysine. N6-acetyllysine occurs at positions 189 and 370.

Belongs to the complex I NDUFA9 subunit family. In terms of assembly, complex I is composed of 45 different subunits. This a component of the hydrophobic protein fraction. Interacts with BLOC1S1. Interacts with SLC2A4. Interacts with CLOCK. Interacts with RAB5IF. FAD serves as cofactor. Post-translationally, acetylated on lysine residues. BLOC1S1 is required for acetylation. Acetylated by CLOCK in a circadian manner. Expressed by the principal cells of the epididymis. Detected in flagella of epididymal sperm (at protein level).

The protein localises to the mitochondrion matrix. Accessory subunit of the mitochondrial membrane respiratory chain NADH dehydrogenase (Complex I), that is believed not to be involved in catalysis. Complex I functions in the transfer of electrons from NADH to the respiratory chain. The immediate electron acceptor for the enzyme is believed to be ubiquinone. The sequence is that of NADH dehydrogenase [ubiquinone] 1 alpha subcomplex subunit 9, mitochondrial from Rattus norvegicus (Rat).